Here is a 411-residue protein sequence, read N- to C-terminus: uncharacterized protein (411 aa).

In the C-terminal section; belongs to the PAPS reductase family.

This is an uncharacterized protein from Methanocaldococcus jannaschii (strain ATCC 43067 / DSM 2661 / JAL-1 / JCM 10045 / NBRC 100440) (Methanococcus jannaschii).